Reading from the N-terminus, the 396-residue chain is Elongation factor Tu (396 aa).

Positions 10–206 (KPHVNVGTIG…ALDTYIPTPE (197 aa)) constitute a tr-type G domain. Positions 19 to 26 (GHVDHGKT) are G1. 19–26 (GHVDHGKT) contributes to the GTP binding site. T26 lines the Mg(2+) pocket. Positions 60-64 (GITIN) are G2. The interval 81–84 (DCPG) is G3. GTP is bound by residues 81–85 (DCPGH) and 136–139 (NKCD). The tract at residues 136–139 (NKCD) is G4. The interval 174 to 176 (SAK) is G5.

This sequence belongs to the TRAFAC class translation factor GTPase superfamily. Classic translation factor GTPase family. EF-Tu/EF-1A subfamily. Monomer.

The protein resides in the cytoplasm. The enzyme catalyses GTP + H2O = GDP + phosphate + H(+). GTP hydrolase that promotes the GTP-dependent binding of aminoacyl-tRNA to the A-site of ribosomes during protein biosynthesis. The chain is Elongation factor Tu from Thiomonas delicata (Thiomonas cuprina).